The primary structure comprises 194 residues: Crossover junction endodeoxyribonuclease RuvC (194 aa).

Active-site residues include Asp8, Glu72, and Asp144. Mg(2+) contacts are provided by Asp8, Glu72, and Asp144.

This sequence belongs to the RuvC family. Homodimer which binds Holliday junction (HJ) DNA. The HJ becomes 2-fold symmetrical on binding to RuvC with unstacked arms; it has a different conformation from HJ DNA in complex with RuvA. In the full resolvosome a probable DNA-RuvA(4)-RuvB(12)-RuvC(2) complex forms which resolves the HJ. The cofactor is Mg(2+).

The protein resides in the cytoplasm. The enzyme catalyses Endonucleolytic cleavage at a junction such as a reciprocal single-stranded crossover between two homologous DNA duplexes (Holliday junction).. In terms of biological role, the RuvA-RuvB-RuvC complex processes Holliday junction (HJ) DNA during genetic recombination and DNA repair. Endonuclease that resolves HJ intermediates. Cleaves cruciform DNA by making single-stranded nicks across the HJ at symmetrical positions within the homologous arms, yielding a 5'-phosphate and a 3'-hydroxyl group; requires a central core of homology in the junction. The consensus cleavage sequence is 5'-(A/T)TT(C/G)-3'. Cleavage occurs on the 3'-side of the TT dinucleotide at the point of strand exchange. HJ branch migration catalyzed by RuvA-RuvB allows RuvC to scan DNA until it finds its consensus sequence, where it cleaves and resolves the cruciform DNA. This Psychrobacter cryohalolentis (strain ATCC BAA-1226 / DSM 17306 / VKM B-2378 / K5) protein is Crossover junction endodeoxyribonuclease RuvC.